Reading from the N-terminus, the 94-residue chain is Prepro-gonadotropin-releasing hormone-like protein (94 aa).

The first 21 residues, 1 to 21 (MNACILLTTLVTMITIEKVQG), serve as a signal peptide directing secretion.

The protein localises to the secreted. In terms of biological role, neuropeptide involved in reproduction. May be an important hormone in the regulation of gonadal maturation. This chain is Prepro-gonadotropin-releasing hormone-like protein, found in Ruditapes philippinarum (Japanese carpet shell).